A 248-amino-acid polypeptide reads, in one-letter code: Tyrosine recombinase XerD-like (248 aa).

The 72-residue stretch at 1–72 (MKSYIEPFIA…TANQFLYYLY (72 aa)) folds into the Core-binding (CB) domain. In terms of domain architecture, Tyr recombinase spans 85–248 (DTMKVMRTEK…PVTLEKYYKS (164 aa)). Active-site residues include Lys149 and Arg213. Tyr245 functions as the O-(3'-phospho-DNA)-tyrosine intermediate in the catalytic mechanism.

Belongs to the 'phage' integrase family. XerD-like subfamily.

It is found in the cytoplasm. In terms of biological role, putative tyrosine recombinase. Not involved in the cutting and rejoining of the recombining DNA molecules on dif(SL) site. The chain is Tyrosine recombinase XerD-like from Streptococcus pyogenes serotype M6 (strain ATCC BAA-946 / MGAS10394).